A 289-amino-acid polypeptide reads, in one-letter code: Borealin (289 aa).

The required for interaction with INCENP stretch occupies residues 1–58; that stretch reads MAPKKRSSRGTRTNTLRSRKLASFLKDFDREVQVRTKQIESDRQTLLKEVENLYNIEI. The segment at 1–88 is required for centromere localization; the sequence is MAPKKRSSRG…NKQALEEAAK (88 aa). The tract at residues 1 to 150 is required for interaction with SENP3; that stretch reads MAPKKRSSRG…KKSHKNLRSA (150 aa). Residues 10-109 are required to form a minimal CPC core complex that localizes to the central spindle and midbody and properly executes the role of the CPC during cytokinesis; it reads GTRTNTLRSR…TAEAIQTPLK (100 aa). Positions 20 to 78 are required for interaction with INCENP and BIRC5; sequence KLASFLKDFDREVQVRTKQIESDRQTLLKEVENLYNIEILRLPKALQGMKWLDYFALGG. Arg-91 is modified (citrulline). Thr-94 carries the post-translational modification Phosphothreonine; by TTK. At Thr-106 the chain carries Phosphothreonine. Ser-110 carries the phosphoserine modification. The disordered stretch occupies residues 122–173; sequence SIKEEEEEEEEGGGGGGRTKKSHKNLRSAKVKRCLPSKKRTQSIQGRGRSKR. Positions 123–133 are enriched in acidic residues; the sequence is IKEEEEEEEEG. The span at 139–162 shows a compositional bias: basic residues; sequence RTKKSHKNLRSAKVKRCLPSKKRT. Residue Lys-145 forms a Glycyl lysine isopeptide (Lys-Gly) (interchain with G-Cter in SUMO2) linkage. Position 175 is a phosphoserine (Ser-175). 2 positions are modified to phosphothreonine: Thr-198 and Thr-213. 4 positions are modified to phosphoserine: Ser-228, Ser-233, Ser-247, and Ser-253.

Belongs to the borealin family. May form homooligomers and homodimers. Component of the chromosomal passenger complex (CPC) composed of at least BIRC5/survivin, CDCA8/borealin, INCENP, AURKB or AURKC; in the complex forms a triple-helix bundle-based subcomplex with INCENP and BIRC5. Interacts with SENP3, UBE2I and RANBP2. Interacts (phosphorylated) with SGO1 and SGO2A; the association is dependent on CDK1. Phosphorylated by TTK, essentially at Thr-94. Phosphorylation (probably by CDK1) promotes targeting of the CPC to centromeric DNA. Post-translationally, sumoylated by UBE2I and RANBP2. Desumoylated by SENP3 through the removal of SUMO2 and SUMO3. In terms of processing, citrullinated by PADI4.

It is found in the nucleus. Its subcellular location is the nucleolus. The protein localises to the cytoplasm. The protein resides in the chromosome. It localises to the centromere. It is found in the cytoskeleton. Its subcellular location is the spindle. In terms of biological role, component of the chromosomal passenger complex (CPC), a complex that acts as a key regulator of mitosis. The CPC complex has essential functions at the centromere in ensuring correct chromosome alignment and segregation and is required for chromatin-induced microtubule stabilization and spindle assembly. In the complex, it may be required to direct the CPC to centromeric DNA. Major effector of the TTK kinase in the control of attachment-error-correction and chromosome alignment. The protein is Borealin (Cdca8) of Mus musculus (Mouse).